The sequence spans 431 residues: tRNA (adenine(37)-N6)-methyltransferase (431 aa).

A TsaA-like domain is found at Thr-30 to Asn-168. Residues Pro-47–Gln-49, His-90–Lys-91, Arg-117, Leu-127, and Ile-148–Thr-151 contribute to the S-adenosyl-L-methionine site. The interval Leu-196 to Glu-242 is disordered. A compositionally biased stretch (basic and acidic residues) spans Ser-207–Glu-242.

The protein belongs to the tRNA methyltransferase O family.

It carries out the reaction N(6)-L-threonylcarbamoyladenosine(37) in tRNA + S-adenosyl-L-methionine = N(6)-methyl,N(6)-L-threonylcarbamoyladenosine(37) in tRNA + S-adenosyl-L-homocysteine + H(+). Functionally, S-adenosyl-L-methionine-dependent methyltransferase responsible for the addition of the methyl group in the formation of N6-methyl-N6-threonylcarbamoyladenosine at position 37 (m(6)t(6)A37) of the tRNA anticodon loop of tRNA(Ser)(GCU). The methyl group of m(6)t(6)A37 may improve the efficiency of the tRNA decoding ability. May bind to tRNA. The protein is tRNA (adenine(37)-N6)-methyltransferase of Mus musculus (Mouse).